The sequence spans 157 residues: SsrA-binding protein (157 aa).

Residues 132–157 (VHDKRQAQKDKDWAREKDRLFKKAYK) are disordered. A compositionally biased stretch (basic and acidic residues) spans 135 to 157 (KRQAQKDKDWAREKDRLFKKAYK).

This sequence belongs to the SmpB family.

It localises to the cytoplasm. Its function is as follows. Required for rescue of stalled ribosomes mediated by trans-translation. Binds to transfer-messenger RNA (tmRNA), required for stable association of tmRNA with ribosomes. tmRNA and SmpB together mimic tRNA shape, replacing the anticodon stem-loop with SmpB. tmRNA is encoded by the ssrA gene; the 2 termini fold to resemble tRNA(Ala) and it encodes a 'tag peptide', a short internal open reading frame. During trans-translation Ala-aminoacylated tmRNA acts like a tRNA, entering the A-site of stalled ribosomes, displacing the stalled mRNA. The ribosome then switches to translate the ORF on the tmRNA; the nascent peptide is terminated with the 'tag peptide' encoded by the tmRNA and targeted for degradation. The ribosome is freed to recommence translation, which seems to be the essential function of trans-translation. This is SsrA-binding protein from Francisella tularensis subsp. tularensis (strain FSC 198).